The following is a 140-amino-acid chain: FLYWCH family member 2 (140 aa).

Disordered stretches follow at residues Met-1 to Phe-39 and His-84 to Leu-140. Ser-21 is modified (phosphoserine). Over residues Pro-98–Asp-114 the composition is skewed to basic and acidic residues. Low complexity predominate over residues Ala-118–Glu-127.

The polypeptide is FLYWCH family member 2 (FLYWCH2) (Homo sapiens (Human)).